The following is a 535-amino-acid chain: uncharacterized protein (535 aa).

The next 6 membrane-spanning stretches (helical) occupy residues 63-83 (LTGI…PSIY), 90-110 (VTFG…TYWI), 143-163 (VAAV…TLYG), 168-188 (VFVT…ATNC), 226-246 (SLGS…VLLV), and 258-278 (VLIL…ILAW). The region spanning 279-330 (LTAAPVRVVRAALKRVEQGDLRGDLVVFDGTELGELQRGFNAMVNGLRERER) is the HAMP domain. In terms of domain architecture, Guanylate cyclase spans 362 to 486 (AVVFVDIVGS…KPVNQAARLC (125 aa)).

Belongs to the adenylyl cyclase class-3 family.

The protein localises to the cell membrane. This is an uncharacterized protein from Mycobacterium tuberculosis (strain ATCC 25618 / H37Rv).